Here is a 258-residue protein sequence, read N- to C-terminus: Deoxyribose-phosphate aldolase (258 aa).

D102 (proton donor/acceptor) is an active-site residue. K165 acts as the Schiff-base intermediate with acetaldehyde in catalysis. Catalysis depends on K199, which acts as the Proton donor/acceptor.

It belongs to the DeoC/FbaB aldolase family. DeoC type 2 subfamily.

The protein resides in the cytoplasm. The enzyme catalyses 2-deoxy-D-ribose 5-phosphate = D-glyceraldehyde 3-phosphate + acetaldehyde. It functions in the pathway carbohydrate degradation; 2-deoxy-D-ribose 1-phosphate degradation; D-glyceraldehyde 3-phosphate and acetaldehyde from 2-deoxy-alpha-D-ribose 1-phosphate: step 2/2. Its function is as follows. Catalyzes a reversible aldol reaction between acetaldehyde and D-glyceraldehyde 3-phosphate to generate 2-deoxy-D-ribose 5-phosphate. This chain is Deoxyribose-phosphate aldolase, found in Aliivibrio fischeri (strain ATCC 700601 / ES114) (Vibrio fischeri).